The chain runs to 354 residues: Probable cinnamyl alcohol dehydrogenase 5 (354 aa).

Cysteine 43 contacts Zn(2+). Serine 45 is a binding site for NADP(+). Zn(2+) contacts are provided by histidine 65, glutamate 66, cysteine 96, cysteine 99, cysteine 102, cysteine 110, and cysteine 159. NADP(+) contacts are provided by residues threonine 163, 184–189 (GLGGLG), 207–212 (SSSPGK), threonine 247, glycine 271, and 294–296 (SCI).

It belongs to the zinc-containing alcohol dehydrogenase family. In terms of assembly, homodimer. It depends on Zn(2+) as a cofactor.

The enzyme catalyses (E)-cinnamyl alcohol + NADP(+) = (E)-cinnamaldehyde + NADPH + H(+). It carries out the reaction (E)-coniferol + NADP(+) = (E)-coniferaldehyde + NADPH + H(+). The catalysed reaction is (E)-sinapyl alcohol + NADP(+) = (E)-sinapaldehyde + NADPH + H(+). It catalyses the reaction (E)-4-coumaroyl alcohol + NADP(+) = (E)-4-coumaraldehyde + NADPH + H(+). The enzyme catalyses (E)-caffeyl alcohol + NADP(+) = (E)-caffeyl aldehyde + NADPH + H(+). It functions in the pathway aromatic compound metabolism; phenylpropanoid biosynthesis. Involved in lignin biosynthesis. Catalyzes the final step specific for the production of lignin monomers. Catalyzes the NADPH-dependent reduction of coniferaldehyde, 5-hydroxyconiferaldehyde, sinapaldehyde, 4-coumaraldehyde and caffeyl aldehyde to their respective alcohols. The sequence is that of Probable cinnamyl alcohol dehydrogenase 5 from Oryza sativa subsp. japonica (Rice).